The primary structure comprises 632 residues: tRNA uridine 5-carboxymethylaminomethyl modification enzyme MnmG (632 aa).

FAD contacts are provided by residues Gly-15–Gly-20, Ile-127, and Ser-182. Gly-276–Phe-290 is an NAD(+) binding site. Gln-373 provides a ligand contact to FAD.

Belongs to the MnmG family. Homodimer. Heterotetramer of two MnmE and two MnmG subunits. FAD serves as cofactor.

It is found in the cytoplasm. Functionally, NAD-binding protein involved in the addition of a carboxymethylaminomethyl (cmnm) group at the wobble position (U34) of certain tRNAs, forming tRNA-cmnm(5)s(2)U34. This Streptococcus pyogenes serotype M12 (strain MGAS2096) protein is tRNA uridine 5-carboxymethylaminomethyl modification enzyme MnmG.